We begin with the raw amino-acid sequence, 397 residues long: Elongation factor Tu (397 aa).

Residues 10–207 (KPHVNVGTIG…TLDTYIPEPE (198 aa)) form the tr-type G domain. A G1 region spans residues 19–26 (GHVDHGKT). GTP is bound at residue 19 to 26 (GHVDHGKT). T26 is a Mg(2+) binding site. The interval 60–64 (GITIN) is G2. Positions 81–84 (DCPG) are G3. Residues 81–85 (DCPGH) and 136–139 (NKAD) contribute to the GTP site. Residues 136–139 (NKAD) form a G4 region. Residues 174–176 (SAL) form a G5 region.

The protein belongs to the TRAFAC class translation factor GTPase superfamily. Classic translation factor GTPase family. EF-Tu/EF-1A subfamily. In terms of assembly, monomer.

It localises to the cytoplasm. The enzyme catalyses GTP + H2O = GDP + phosphate + H(+). GTP hydrolase that promotes the GTP-dependent binding of aminoacyl-tRNA to the A-site of ribosomes during protein biosynthesis. This is Elongation factor Tu from Pseudomonas fluorescens (strain ATCC BAA-477 / NRRL B-23932 / Pf-5).